Reading from the N-terminus, the 3712-residue chain is Laminin subunit alpha (3712 aa).

The N-terminal stretch at 1-22 (MGHGVASIGALLVILAISYCQA) is a signal peptide. A Laminin N-terminal domain is found at 23–272 (ELTPPYFNLA…SIKDISIGGR (250 aa)). Residues asparagine 116 and asparagine 219 are each glycosylated (N-linked (GlcNAc...) asparagine). Disulfide bonds link cysteine 273/cysteine 282, cysteine 275/cysteine 296, cysteine 298/cysteine 307, cysteine 310/cysteine 330, cysteine 333/cysteine 342, cysteine 335/cysteine 367, cysteine 370/cysteine 379, cysteine 382/cysteine 400, cysteine 403/cysteine 414, cysteine 405/cysteine 421, cysteine 423/cysteine 432, cysteine 435/cysteine 445, cysteine 448/cysteine 460, cysteine 450/cysteine 468, cysteine 470/cysteine 479, cysteine 482/cysteine 492, cysteine 495/cysteine 507, cysteine 497/cysteine 514, cysteine 516/cysteine 525, cysteine 528/cysteine 538, cysteine 541/cysteine 553, cysteine 543/cysteine 560, cysteine 562/cysteine 571, cysteine 574/cysteine 584, cysteine 587/cysteine 599, cysteine 589/cysteine 605, cysteine 607/cysteine 616, cysteine 619/cysteine 629, cysteine 632/cysteine 644, cysteine 634/cysteine 650, cysteine 652/cysteine 661, cysteine 664/cysteine 674, cysteine 677/cysteine 691, cysteine 679/cysteine 700, cysteine 702/cysteine 711, cysteine 714/cysteine 729, cysteine 732/cysteine 746, cysteine 734/cysteine 753, cysteine 755/cysteine 764, cysteine 767/cysteine 782, cysteine 785/cysteine 797, cysteine 787/cysteine 804, and cysteine 806/cysteine 815. Laminin EGF-like domains are found at residues 273 to 332 (CMCN…NCEP), 333 to 402 (CNCH…VCSP), 403 to 447 (CQCD…NCRE), 448 to 494 (CECN…ECKA), 495 to 540 (CECN…TCSY), 541 to 586 (CDCD…DCKP), 587 to 631 (CNCS…DCLP), 632 to 676 (CHCD…SCED), 677 to 731 (CNCD…GCEI), and 732 to 784 (CDCW…GCKD). N-linked (GlcNAc...) asparagine glycosylation is present at asparagine 395. The N-linked (GlcNAc...) asparagine glycan is linked to asparagine 453. Asparagine 508 carries N-linked (GlcNAc...) asparagine glycosylation. The N-linked (GlcNAc...) asparagine glycan is linked to asparagine 588. Asparagine 722 carries N-linked (GlcNAc...) asparagine glycosylation. The Laminin EGF-like 11; truncated domain occupies 785–815 (CSCDVGGSWQSVCDKISGQCKCHPRITGLAC). The tract at residues 816–1374 (TQPLTTHFFP…TADYNSGALP (559 aa)) is domain IV''. Asparagine 897 and asparagine 1352 each carry an N-linked (GlcNAc...) asparagine glycan. Disulfide bonds link cysteine 1375/cysteine 1387, cysteine 1377/cysteine 1394, cysteine 1396/cysteine 1405, cysteine 1408/cysteine 1418, cysteine 1421/cysteine 1429, cysteine 1423/cysteine 1436, cysteine 1438/cysteine 1447, cysteine 1450/cysteine 1463, cysteine 1466/cysteine 1480, cysteine 1468/cysteine 1487, cysteine 1489/cysteine 1498, cysteine 1501/cysteine 1511, cysteine 1514/cysteine 1526, cysteine 1516/cysteine 1533, cysteine 1535/cysteine 1544, and cysteine 1547/cysteine 1562. Laminin EGF-like domains follow at residues 1375 to 1420 (CNCD…DCKP), 1421 to 1465 (CKCP…GCEE), 1466 to 1513 (CACN…HCEQ), and 1514 to 1564 (CSCH…GCTT). Residue asparagine 1484 is glycosylated (N-linked (GlcNAc...) asparagine). Positions 1565 to 1574 (CFCFGKTSRC) constitute a Laminin EGF-like 16; first part domain. Asparagine 1583 and asparagine 1617 each carry an N-linked (GlcNAc...) asparagine glycan. Residues 1585–1775 (SLLKHVSITT…GEYQFLAVER (191 aa)) form the Laminin IV type A domain. A Laminin EGF-like 16; second part domain is found at 1776-1808 (CSCPPGYSGHSCEDCAPGYYRDPSGPYGGYCIP). 26 cysteine pairs are disulfide-bonded: cysteine 1778-cysteine 1787, cysteine 1790-cysteine 1806, cysteine 1809-cysteine 1818, cysteine 1811-cysteine 1825, cysteine 1828-cysteine 1837, cysteine 1840-cysteine 1856, cysteine 1859-cysteine 1874, cysteine 1861-cysteine 1885, cysteine 1887-cysteine 1896, cysteine 1899-cysteine 1914, cysteine 1917-cysteine 1931, cysteine 1919-cysteine 1938, cysteine 1941-cysteine 1950, cysteine 1953-cysteine 1967, cysteine 1970-cysteine 1980, cysteine 1972-cysteine 1987, cysteine 1989-cysteine 1998, cysteine 2001-cysteine 2014, cysteine 2017-cysteine 2028, cysteine 2019-cysteine 2035, cysteine 2037-cysteine 2046, cysteine 2049-cysteine 2061, cysteine 2064-cysteine 2076, cysteine 2066-cysteine 2083, cysteine 2085-cysteine 2094, and cysteine 2097-cysteine 2109. Laminin EGF-like domains are found at residues 1809–1858 (CECN…DCMI), 1859–1916 (CACP…VCKP), 1917–1969 (CECS…NCQS), 1970–2016 (CDCD…GCRA), 2017–2063 (CDCG…GCTP), and 2064–2111 (CNCN…GCQE). Residue asparagine 1847 is glycosylated (N-linked (GlcNAc...) asparagine). The N-linked (GlcNAc...) asparagine glycan is linked to asparagine 1943. Asparagine 2024 carries an N-linked (GlcNAc...) asparagine glycan. Positions 2112–2671 (CNNCHHALLD…EAARQLANSI (560 aa)) are domain II and I. The stretch at 2178 to 2249 (KKANSELESD…LSKNLEAAAS (72 aa)) forms a coiled coil. Residues asparagine 2196, asparagine 2215, asparagine 2267, asparagine 2301, and asparagine 2323 are each glycosylated (N-linked (GlcNAc...) asparagine). The stretch at 2301 to 2321 (NKSLNALKNDIGEFSDHLEDL) forms a coiled coil. A coiled-coil region spans residues 2376 to 2450 (DLTLNQINQK…QYTDMTASAE (75 aa)). N-linked (GlcNAc...) asparagine glycans are attached at residues asparagine 2482, asparagine 2524, asparagine 2538, asparagine 2569, asparagine 2699, asparagine 2720, asparagine 2890, asparagine 2938, and asparagine 3010. A coiled-coil region spans residues 2541 to 2676 (EHQLKDINKL…LANSIKVGVN (136 aa)). 3 consecutive Laminin G-like domains span residues 2672-2868 (KVGV…ERDV), 2876-3048 (VTGL…EEGC), and 3055-3223 (VVSY…INGC). A disulfide bridge links cysteine 3022 with cysteine 3048. Asparagine 3070 carries an N-linked (GlcNAc...) asparagine glycan. Cysteine 3196 and cysteine 3223 are joined by a disulfide. A disordered region spans residues 3244–3297 (NEVESPWSNADTLPPLKPDIESTLPPTTPTTTTTTTTTTTSTTTTSTTTTTTTP). Over residues 3265 to 3297 (STLPPTTPTTTTTTTTTTTSTTTTSTTTTTTTP) the composition is skewed to low complexity. 2 Laminin G-like domains span residues 3349 to 3528 (GYRF…VVPC) and 3534 to 3709 (RGLF…QGYC). The N-linked (GlcNAc...) asparagine glycan is linked to asparagine 3491. The cysteines at positions 3505 and 3528 are disulfide-linked. The N-linked (GlcNAc...) asparagine glycan is linked to asparagine 3612. A disulfide bond links cysteine 3682 and cysteine 3709.

Laminin is a complex glycoprotein, consisting of three different polypeptide chains (alpha, beta, gamma), which are bound to each other by disulfide bonds into a cross-shaped molecule comprising one long and three short arms with globules at each end. As to expression, newly formed mesoderm and later prominently expressed in hemocytes, which also synthesize collagen IV. Expressed in muscles.

Its subcellular location is the secreted. It is found in the extracellular space. It localises to the extracellular matrix. The protein localises to the basement membrane. The protein resides in the synapse. Its subcellular location is the cell projection. It is found in the axon. It localises to the cytoplasmic vesicle. The protein localises to the secretory vesicle. The protein resides in the synaptic vesicle. Binding to cells via a high affinity receptor, laminin is thought to mediate the attachment, migration and organization of cells into tissues during embryonic development by interacting with other extracellular matrix components. Activates presynaptic signaling involving integrin alpha-PS3/beta-nu and Fak to suppress neuromuscular junction (NMJ) growth during larval development and during low crawling activity, but not during higher-crawling conditions. Mediates, together with integrin alpha-PS3/beta-nu, glutamate receptor-modulated NMJ growth. This Drosophila melanogaster (Fruit fly) protein is Laminin subunit alpha (LanA).